A 259-amino-acid polypeptide reads, in one-letter code: uncharacterized protein (259 aa).

Helical transmembrane passes span Ile-9–Leu-31, Leu-84–Phe-106, Phe-126–Gly-148, Ser-153–Val-175, His-196–Ala-215, and Thr-230–Gly-252.

It localises to the cell membrane. This is an uncharacterized protein from Archaeoglobus fulgidus (strain ATCC 49558 / DSM 4304 / JCM 9628 / NBRC 100126 / VC-16).